A 433-amino-acid chain; its full sequence is Serine hydroxymethyltransferase (433 aa).

Residues leucine 121 and 125–127 contribute to the (6S)-5,6,7,8-tetrahydrofolate site; that span reads GHI. The residue at position 231 (lysine 231) is an N6-(pyridoxal phosphate)lysine.

It belongs to the SHMT family. As to quaternary structure, homodimer. The cofactor is pyridoxal 5'-phosphate.

The protein resides in the cytoplasm. Its pathway is amino-acid biosynthesis; glycine biosynthesis; glycine from L-serine: step 1/1. Functionally, catalyzes the reversible interconversion of serine and glycine with a modified folate serving as the one-carbon carrier. Also exhibits a pteridine-independent aldolase activity toward beta-hydroxyamino acids, producing glycine and aldehydes, via a retro-aldol mechanism. The protein is Serine hydroxymethyltransferase of Picrophilus torridus (strain ATCC 700027 / DSM 9790 / JCM 10055 / NBRC 100828 / KAW 2/3).